A 406-amino-acid polypeptide reads, in one-letter code: Pygopus homolog 2 (406 aa).

Disordered stretches follow at residues 1 to 73 (MAAS…DHLV) and 106 to 323 (VQGG…PQPP). At alanine 2 the chain carries N-acetylalanine. Phosphoserine is present on serine 40. The Nuclear localization signal signature appears at 41–47 (PEKKRRK). Composition is skewed to pro residues over residues 131 to 141 (RQPPPFPPNPM) and 149 to 158 (PQGPGYPPPG). A compositionally biased stretch (polar residues) spans 164–179 (SQPFNQPLGQNFSPPS). A compositionally biased stretch (pro residues) spans 236–252 (SLPPNTSPFPGPDPGFP). Residues 285-296 (NGNQPSFPPNSS) show a composition bias toward polar residues. Residue threonine 302 is modified to Phosphothreonine. The segment at 327 to 385 (VYPCGACRSEVNDDQDAILCEASCQKWFHRECTGMTESAYGLLTTEASAVWACDLCLKT) adopts a PHD-type zinc-finger fold.

As to quaternary structure, binds to BCL9 via the PHD-type zinc finger motif, and thereby becomes part of the nuclear beta-catenin/TCF complex.

The protein resides in the nucleus. In terms of biological role, involved in signal transduction through the Wnt pathway. The sequence is that of Pygopus homolog 2 (PYGO2) from Homo sapiens (Human).